Consider the following 248-residue polypeptide: Probable transcriptional regulatory protein Mchl_0946 (248 aa).

Belongs to the TACO1 family.

The protein localises to the cytoplasm. This chain is Probable transcriptional regulatory protein Mchl_0946, found in Methylorubrum extorquens (strain CM4 / NCIMB 13688) (Methylobacterium extorquens).